The chain runs to 99 residues: Nucleoid-associated protein SSU98_0195 (99 aa).

It belongs to the YbaB/EbfC family. Homodimer.

The protein resides in the cytoplasm. The protein localises to the nucleoid. In terms of biological role, binds to DNA and alters its conformation. May be involved in regulation of gene expression, nucleoid organization and DNA protection. In Streptococcus suis (strain 98HAH33), this protein is Nucleoid-associated protein SSU98_0195.